The following is a 394-amino-acid chain: Protein maelstrom (394 aa).

The HMG box DNA-binding region spans 2–69 (APKKQNGFMM…ARRDKRGSLN (68 aa)). The interval 44-93 (TQQRGPYNSDAKDANAARRDKRGSLNGHGQVDKAQREAAESLMDKAQREA) is disordered. Positions 73–93 (QVDKAQREAAESLMDKAQREA) are enriched in basic and acidic residues.

The protein belongs to the maelstrom family.

The protein resides in the cytoplasm. Its subcellular location is the nucleus. Its function is as follows. Involved both in the piRNA and miRNA metabolic processes. As a component of the meiotic nuage, plays a central role during oogenesis by repressing transposable elements and preventing their mobilization, which is essential for the germline integrity. Repression of transposable elements is mediated via the piRNA metabolic process, which mediates the repression of transposable elements during meiosis by forming complexes composed of piRNAs and Piwi proteins and governs the repression of transposons. As a nuclear component, it is required for proper differentiation in the germline stem cell (GSC) lineage by repressing microRNA-7 (miR-7), thereby acting as an indirect regulator of bag-of-marbles (Bam). Acts by binding to the promoter of miR-7 gene and repressing its expression; miR-7 repression alleviates the Bam repression by miR-7, thereby allowing differentiation in the germline stem cell (GSC) lineage. The polypeptide is Protein maelstrom (mael) (Drosophila sechellia (Fruit fly)).